The following is a 623-amino-acid chain: Prothrombin (623 aa).

An N-terminal signal peptide occupies residues 1–24 (MAHVGGLWLHGCLALAVLVSLVHS). The propeptide occupies 25–43 (QHVFMAPQQALSLLQRARR). A Gla domain is found at 44-90 (ANSGFFEEMRKGNLERECVEEQCSREEAYEALESPSETDAFWAKYTA). 4-carboxyglutamate is present on residues Glu50, Glu51, Glu58, Glu60, Glu63, Glu64, Glu69, Glu70, Glu73, and Glu76. Cys61 and Cys66 form a disulfide bridge. 11 disulfides stabilise this stretch: Cys91/Cys104, Cys109/Cys187, Cys130/Cys170, Cys158/Cys182, Cys214/Cys292, Cys235/Cys275, Cys263/Cys287, Cys337/Cys483, Cys392/Cys408, Cys537/Cys551, and Cys565/Cys595. Kringle domains lie at 108-187 (NCAE…IPVC) and 213-292 (TCVP…LDYC). Residues Asn120 and Asn144 are each glycosylated (N-linked (GlcNAc...) asparagine). The region spanning 365–619 (IVEGSDAEIG…LKKWMQKVID (255 aa)) is the Peptidase S1 domain. Residue His407 is the Charge relay system of the active site. A glycan (N-linked (GlcNAc...) asparagine) is linked at Asn417. Residue Asp463 is the Charge relay system of the active site. Residues 552-574 (AGYKPDEGKRGDACEGDSGGPFV) form a high affinity receptor-binding region which is also known as the TP508 peptide region. Ser569 serves as the catalytic Charge relay system.

Belongs to the peptidase S1 family. As to quaternary structure, heterodimer (named alpha-thrombin) of a light and a heavy chain; disulfide-linked. Forms a heterodimer with SERPINA5. In plasma, interacts (via N-terminus) with alpha-1-microglobulin; this interaction does not prevent the activation of prothrombin to thrombin. Post-translationally, the gamma-carboxyglutamyl residues, which bind calcium ions, result from the carboxylation of glutamyl residues by a microsomal enzyme, the vitamin K-dependent carboxylase. The modified residues are necessary for the calcium-dependent interaction with a negatively charged phospholipid surface, which is essential for the conversion of prothrombin to thrombin. In the penultimate step of the coagulation cascade, prothrombin is converted to thrombin by the prothrombinase complex composed of factor Xa (F10), cofactor Va (F5), and phospholipids. This activation requires factor Xa-catalyzed sequential cleavage at 2 sites, Arg-315 and Arg-364, along 2 possible pathways. In the first pathway, the first cleavage occurs at Arg-315, leading to the formation of the inactive intermediate prethrombin-2. This pathway preferentially occurs on platelets and in the absence of cofactor Va. In the second pathway, the first cleavage occurs at Arg-364, which separates protease domain into 2 chains that remain connected through a disulfide bond and generates the active intermediate meizothrombin. The presence of cofactor Va directs activation along the meizothrombin pathway and greatly accelerates the rate of cleavage at Arg-364, but has a smaller effect on the cleavage of meizothrombin at Arg-315. Meizothrombin accumulates as an intermediate when prothrombinase is assembled on the membrane of red blood cells.

It carries out the reaction Selective cleavage of Arg-|-Gly bonds in fibrinogen to form fibrin and release fibrinopeptides A and B.. With respect to regulation, activity is promoted in the presence of negatively charged surfaces, such as polyphosphate and dextran sulfate. Inhibited by SERPINA5. In terms of biological role, thrombin, which cleaves bonds after Arg and Lys, converts fibrinogen to fibrin and activates factors V, VII, VIII, XIII, and, in complex with thrombomodulin, protein C. Functions in blood homeostasis, inflammation and wound healing. Activates coagulation factor XI (F11); activation is promoted by the contact with negatively charged surfaces. Triggers the production of pro-inflammatory cytokines, such as MCP-1/CCL2 and IL8/CXCL8, in endothelial cells. In Sus scrofa (Pig), this protein is Prothrombin (F2).